A 67-amino-acid chain; its full sequence is MGKVFFFVLMIAIIGSTFLIEEALGSLVGCPRPDFLPSWNRCKSCVCKNNKLKCPKILKGSLLKTAA.

The signal sequence occupies residues 1–25 (MGKVFFFVLMIAIIGSTFLIEEALG).

The protein belongs to the ant myrmeciitoxin-01 family. As to quaternary structure, homodimer; disulfide-linked. Contains 2 intrachain disulfide bonds (one per chain) and 1 interchain disulfide bond. In terms of tissue distribution, expressed by the venom gland.

The protein localises to the secreted. The protein is U-myrmeciitoxin(01)-Mg4a of Myrmecia gulosa (Red bulldog ant).